Reading from the N-terminus, the 223-residue chain is ATP phosphoribosyltransferase (223 aa).

It belongs to the ATP phosphoribosyltransferase family. Short subfamily. Heteromultimer composed of HisG and HisZ subunits.

The protein localises to the cytoplasm. The enzyme catalyses 1-(5-phospho-beta-D-ribosyl)-ATP + diphosphate = 5-phospho-alpha-D-ribose 1-diphosphate + ATP. It participates in amino-acid biosynthesis; L-histidine biosynthesis; L-histidine from 5-phospho-alpha-D-ribose 1-diphosphate: step 1/9. Functionally, catalyzes the condensation of ATP and 5-phosphoribose 1-diphosphate to form N'-(5'-phosphoribosyl)-ATP (PR-ATP). Has a crucial role in the pathway because the rate of histidine biosynthesis seems to be controlled primarily by regulation of HisG enzymatic activity. This is ATP phosphoribosyltransferase from Bordetella bronchiseptica (strain ATCC BAA-588 / NCTC 13252 / RB50) (Alcaligenes bronchisepticus).